We begin with the raw amino-acid sequence, 667 residues long: UvrABC system protein B (667 aa).

Residues 24–195 (EGLRRGDRFQ…SSGGVFHLRG (172 aa)) enclose the Helicase ATP-binding domain. 37-44 (GVTGSGKT) lines the ATP pocket. Positions 90-113 (YYDYYQPEAYIPTKDLYIEKDADI) match the Beta-hairpin motif. The 154-residue stretch at 428-581 (QVDDFIEEVQ…QLMYNIEHDI (154 aa)) folds into the Helicase C-terminal domain. The region spanning 626–661 (EEYLALLEEEMWRASSELRYEDAAMLRDEMLRIKRE) is the UVR domain.

Belongs to the UvrB family. As to quaternary structure, forms a heterotetramer with UvrA during the search for lesions. Interacts with UvrC in an incision complex.

It is found in the cytoplasm. Functionally, the UvrABC repair system catalyzes the recognition and processing of DNA lesions. A damage recognition complex composed of 2 UvrA and 2 UvrB subunits scans DNA for abnormalities. Upon binding of the UvrA(2)B(2) complex to a putative damaged site, the DNA wraps around one UvrB monomer. DNA wrap is dependent on ATP binding by UvrB and probably causes local melting of the DNA helix, facilitating insertion of UvrB beta-hairpin between the DNA strands. Then UvrB probes one DNA strand for the presence of a lesion. If a lesion is found the UvrA subunits dissociate and the UvrB-DNA preincision complex is formed. This complex is subsequently bound by UvrC and the second UvrB is released. If no lesion is found, the DNA wraps around the other UvrB subunit that will check the other stand for damage. In Kosmotoga olearia (strain ATCC BAA-1733 / DSM 21960 / TBF 19.5.1), this protein is UvrABC system protein B.